Consider the following 203-residue polypeptide: Small ribosomal subunit protein uS4 (203 aa).

The 61-residue stretch at 93–153 (RRFDNVVFRA…PKSKNMSAVS (61 aa)) folds into the S4 RNA-binding domain.

The protein belongs to the universal ribosomal protein uS4 family. In terms of assembly, part of the 30S ribosomal subunit. Contacts protein S5. The interaction surface between S4 and S5 is involved in control of translational fidelity.

In terms of biological role, one of the primary rRNA binding proteins, it binds directly to 16S rRNA where it nucleates assembly of the body of the 30S subunit. Its function is as follows. With S5 and S12 plays an important role in translational accuracy. This Chlorobium phaeovibrioides (strain DSM 265 / 1930) (Prosthecochloris vibrioformis (strain DSM 265)) protein is Small ribosomal subunit protein uS4.